The sequence spans 156 residues: Small ribosomal subunit protein uS7 (156 aa).

The protein belongs to the universal ribosomal protein uS7 family. In terms of assembly, part of the 30S ribosomal subunit. Contacts proteins S9 and S11.

Functionally, one of the primary rRNA binding proteins, it binds directly to 16S rRNA where it nucleates assembly of the head domain of the 30S subunit. Is located at the subunit interface close to the decoding center, probably blocks exit of the E-site tRNA. The protein is Small ribosomal subunit protein uS7 of Xanthobacter autotrophicus (strain ATCC BAA-1158 / Py2).